Here is a 66-residue protein sequence, read N- to C-terminus: UPF0337 protein M6_Spy1542 (66 aa).

A compositionally biased stretch (basic and acidic residues) spans 1–10; it reads MSEEKLKAKV. Residues 1 to 22 form a disordered region; that stretch reads MSEEKLKAKVEQASGSLKEGAG.

Belongs to the UPF0337 (CsbD) family.

The polypeptide is UPF0337 protein M6_Spy1542 (Streptococcus pyogenes serotype M6 (strain ATCC BAA-946 / MGAS10394)).